A 327-amino-acid polypeptide reads, in one-letter code: Probable cell division protein WhiA (327 aa).

A DNA-binding region (H-T-H motif) is located at residues 275–308 (SLEELGRLADPQMTKDAVAGRIRRLLTMADKRAE).

This sequence belongs to the WhiA family.

In terms of biological role, involved in cell division and chromosome segregation. This is Probable cell division protein WhiA from Corynebacterium glutamicum (strain ATCC 13032 / DSM 20300 / JCM 1318 / BCRC 11384 / CCUG 27702 / LMG 3730 / NBRC 12168 / NCIMB 10025 / NRRL B-2784 / 534).